We begin with the raw amino-acid sequence, 467 residues long: ATP synthase subunit beta (467 aa).

Gly150–Thr157 lines the ATP pocket.

Belongs to the ATPase alpha/beta chains family. In terms of assembly, F-type ATPases have 2 components, CF(1) - the catalytic core - and CF(0) - the membrane proton channel. CF(1) has five subunits: alpha(3), beta(3), gamma(1), delta(1), epsilon(1). CF(0) has three main subunits: a(1), b(2) and c(9-12). The alpha and beta chains form an alternating ring which encloses part of the gamma chain. CF(1) is attached to CF(0) by a central stalk formed by the gamma and epsilon chains, while a peripheral stalk is formed by the delta and b chains.

The protein resides in the cell inner membrane. The catalysed reaction is ATP + H2O + 4 H(+)(in) = ADP + phosphate + 5 H(+)(out). Produces ATP from ADP in the presence of a proton gradient across the membrane. The catalytic sites are hosted primarily by the beta subunits. The sequence is that of ATP synthase subunit beta from Vibrio parahaemolyticus serotype O3:K6 (strain RIMD 2210633).